The chain runs to 264 residues: Thiazole synthase (264 aa).

The active-site Schiff-base intermediate with DXP is lysine 106. 1-deoxy-D-xylulose 5-phosphate is bound by residues glycine 167, 193–194 (AG), and 215–216 (NT).

This sequence belongs to the ThiG family. In terms of assembly, homotetramer. Forms heterodimers with either ThiH or ThiS.

The protein resides in the cytoplasm. It carries out the reaction [ThiS sulfur-carrier protein]-C-terminal-Gly-aminoethanethioate + 2-iminoacetate + 1-deoxy-D-xylulose 5-phosphate = [ThiS sulfur-carrier protein]-C-terminal Gly-Gly + 2-[(2R,5Z)-2-carboxy-4-methylthiazol-5(2H)-ylidene]ethyl phosphate + 2 H2O + H(+). Its pathway is cofactor biosynthesis; thiamine diphosphate biosynthesis. Catalyzes the rearrangement of 1-deoxy-D-xylulose 5-phosphate (DXP) to produce the thiazole phosphate moiety of thiamine. Sulfur is provided by the thiocarboxylate moiety of the carrier protein ThiS. In vitro, sulfur can be provided by H(2)S. The protein is Thiazole synthase of Xylella fastidiosa (strain 9a5c).